The primary structure comprises 254 residues: Acetyl-coenzyme A carboxylase carboxyl transferase subunit beta (254 aa).

Positions methionine 1–glutamate 254 constitute a CoA carboxyltransferase N-terminal domain. Positions 5, 8, 23, and 26 each coordinate Zn(2+). Residues cysteine 5–cysteine 26 form a C4-type zinc finger.

Belongs to the AccD/PCCB family. Acetyl-CoA carboxylase is a heterohexamer composed of biotin carboxyl carrier protein (AccB), biotin carboxylase (AccC) and two subunits each of ACCase subunit alpha (AccA) and ACCase subunit beta (AccD). It depends on Zn(2+) as a cofactor.

Its subcellular location is the cytoplasm. The enzyme catalyses N(6)-carboxybiotinyl-L-lysyl-[protein] + acetyl-CoA = N(6)-biotinyl-L-lysyl-[protein] + malonyl-CoA. It functions in the pathway lipid metabolism; malonyl-CoA biosynthesis; malonyl-CoA from acetyl-CoA: step 1/1. In terms of biological role, component of the acetyl coenzyme A carboxylase (ACC) complex. Biotin carboxylase (BC) catalyzes the carboxylation of biotin on its carrier protein (BCCP) and then the CO(2) group is transferred by the transcarboxylase to acetyl-CoA to form malonyl-CoA. This Limosilactobacillus reuteri (strain DSM 20016) (Lactobacillus reuteri) protein is Acetyl-coenzyme A carboxylase carboxyl transferase subunit beta.